The chain runs to 114 residues: Large ribosomal subunit protein bL20 (114 aa).

This sequence belongs to the bacterial ribosomal protein bL20 family.

In terms of biological role, binds directly to 23S ribosomal RNA and is necessary for the in vitro assembly process of the 50S ribosomal subunit. It is not involved in the protein synthesizing functions of that subunit. This chain is Large ribosomal subunit protein bL20, found in Flavobacterium psychrophilum (strain ATCC 49511 / DSM 21280 / CIP 103535 / JIP02/86).